Consider the following 591-residue polypeptide: NADP-dependent malic enzyme (591 aa).

Basic and acidic residues predominate over residues 1 to 10 (MESTLKEMRD). The interval 1-26 (MESTLKEMRDGASVLDMDPKSTVGGG) is disordered. Tyrosine 139 serves as the catalytic Proton donor. Arginine 192 provides a ligand contact to NAD(+). The Proton acceptor role is filled by lysine 210. A divalent metal cation is bound by residues glutamate 282, aspartate 283, and aspartate 306. Aspartate 306 lines the NAD(+) pocket. 335 to 351 (LFLGAGEAGTGIAELIA) contacts NADP(+). Asparagine 447 contacts NAD(+).

This sequence belongs to the malic enzymes family. Homotetramer. It depends on Mg(2+) as a cofactor. Requires Mn(2+) as cofactor. As to expression, mRNA found twofold higher in leaves and stems than in roots.

It localises to the cytoplasm. It carries out the reaction (S)-malate + NADP(+) = pyruvate + CO2 + NADPH. It catalyses the reaction oxaloacetate + H(+) = pyruvate + CO2. The chain is NADP-dependent malic enzyme from Populus trichocarpa (Western balsam poplar).